The chain runs to 1235 residues: Ubiquitin carboxyl-terminal hydrolase 40 (1235 aa).

A USP domain is found at 41-482 (SGIRNQGGTC…SAYMLFYRKA (442 aa)). The Nucleophile role is filled by cysteine 50. Histidine 305 acts as the Proton acceptor in catalysis.

This sequence belongs to the peptidase C19 family.

It catalyses the reaction Thiol-dependent hydrolysis of ester, thioester, amide, peptide and isopeptide bonds formed by the C-terminal Gly of ubiquitin (a 76-residue protein attached to proteins as an intracellular targeting signal).. The protein is Ubiquitin carboxyl-terminal hydrolase 40 (Usp40) of Mus musculus (Mouse).